A 408-amino-acid polypeptide reads, in one-letter code: Chaperone protein dnaJ 1, mitochondrial (408 aa).

The N-terminal 26 residues, 1–26 (MRRFNWVLRHVQARRTFDSAIGLRQG), are a transit peptide targeting the mitochondrion. A J domain is found at 48-113 (NYYDVLGVSP…ERREEYDKLQ (66 aa)). A CR-type zinc finger spans residues 173-247 (GCTKRLSFDA…CRGSGIVEGT (75 aa)). Zn(2+)-binding residues include C186, C189, C203, C206, C221, C224, C235, and C238. CXXCXGXG motif repeat units lie at residues 186–193 (CDSCDGLG), 203–210 (CPTCRGVG), 221–228 (CQTCKGTG), and 235–242 (CMSCRGSG).

The protein belongs to the DnaJ family. B/II subfamily. In terms of assembly, homodimer. Zn(2+) is required as a cofactor. In terms of tissue distribution, ubiquitous.

It localises to the mitochondrion. Plays a continuous role in plant development probably in the structural organization of compartments. This Arabidopsis thaliana (Mouse-ear cress) protein is Chaperone protein dnaJ 1, mitochondrial (ATJ1).